Reading from the N-terminus, the 488-residue chain is N-succinylglutamate 5-semialdehyde dehydrogenase (488 aa).

NAD(+) is bound at residue 221–226 (GSSRTG). Residues glutamate 244 and cysteine 278 contribute to the active site.

Belongs to the aldehyde dehydrogenase family. AstD subfamily.

The catalysed reaction is N-succinyl-L-glutamate 5-semialdehyde + NAD(+) + H2O = N-succinyl-L-glutamate + NADH + 2 H(+). It participates in amino-acid degradation; L-arginine degradation via AST pathway; L-glutamate and succinate from L-arginine: step 4/5. Catalyzes the NAD-dependent reduction of succinylglutamate semialdehyde into succinylglutamate. This is N-succinylglutamate 5-semialdehyde dehydrogenase from Pseudomonas fluorescens (strain Pf0-1).